The primary structure comprises 69 residues: Conotoxin AbVIE (69 aa).

The first 17 residues, 1-17, serve as a signal peptide directing secretion; it reads VLIIAVLFLTACQLTTA. The propeptide occupies 18–40; that stretch reads ETSSRGKQKHRALRSTDKYSRMT. Intrachain disulfides connect cysteine 43–cysteine 57, cysteine 50–cysteine 61, and cysteine 56–cysteine 66.

The protein belongs to the conotoxin O1 superfamily. In terms of tissue distribution, expressed by the venom duct.

The protein resides in the secreted. The protein is Conotoxin AbVIE of Conus abbreviatus (Abbreviated cone).